Reading from the N-terminus, the 146-residue chain is Probable transporter XF_0765 (146 aa).

4 consecutive transmembrane segments (helical) span residues 9–29 (FTVA…SEMI), 46–66 (NPSL…GMAL), 91–111 (IVFG…CPGP), and 116–136 (LSTG…GMII).

The protein belongs to the TsuA/YedE (TC 9.B.102) family.

The protein localises to the cell inner membrane. This Xylella fastidiosa (strain 9a5c) protein is Probable transporter XF_0765.